A 225-amino-acid polypeptide reads, in one-letter code: Pyridoxine/pyridoxamine 5'-phosphate oxidase (225 aa).

Substrate is bound by residues 21–24 and Lys79; that span reads RKSY. Residues 74-79, 89-90, Arg95, and Lys96 each bind FMN; these read RVVLIK and YT. Substrate-binding residues include Tyr136, Arg140, and Ser144. FMN-binding positions include 153 to 154 and Trp197; that span reads QS. 203–205 provides a ligand contact to substrate; that stretch reads RLH. Arg207 provides a ligand contact to FMN.

The protein belongs to the pyridoxamine 5'-phosphate oxidase family. Homodimer. Requires FMN as cofactor.

It catalyses the reaction pyridoxamine 5'-phosphate + O2 + H2O = pyridoxal 5'-phosphate + H2O2 + NH4(+). The catalysed reaction is pyridoxine 5'-phosphate + O2 = pyridoxal 5'-phosphate + H2O2. The protein operates within cofactor metabolism; pyridoxal 5'-phosphate salvage; pyridoxal 5'-phosphate from pyridoxamine 5'-phosphate: step 1/1. It participates in cofactor metabolism; pyridoxal 5'-phosphate salvage; pyridoxal 5'-phosphate from pyridoxine 5'-phosphate: step 1/1. Its function is as follows. Catalyzes the oxidation of either pyridoxine 5'-phosphate (PNP) or pyridoxamine 5'-phosphate (PMP) into pyridoxal 5'-phosphate (PLP). In Paracidovorax citrulli (strain AAC00-1) (Acidovorax citrulli), this protein is Pyridoxine/pyridoxamine 5'-phosphate oxidase.